Consider the following 524-residue polypeptide: Bifunctional purine biosynthesis protein PurH (524 aa).

The MGS-like domain maps to 1-145 (MIKQALLSVS…KNHRDVTVIV (145 aa)).

This sequence belongs to the PurH family.

The catalysed reaction is (6R)-10-formyltetrahydrofolate + 5-amino-1-(5-phospho-beta-D-ribosyl)imidazole-4-carboxamide = 5-formamido-1-(5-phospho-D-ribosyl)imidazole-4-carboxamide + (6S)-5,6,7,8-tetrahydrofolate. It carries out the reaction IMP + H2O = 5-formamido-1-(5-phospho-D-ribosyl)imidazole-4-carboxamide. The protein operates within purine metabolism; IMP biosynthesis via de novo pathway; 5-formamido-1-(5-phospho-D-ribosyl)imidazole-4-carboxamide from 5-amino-1-(5-phospho-D-ribosyl)imidazole-4-carboxamide (10-formyl THF route): step 1/1. It participates in purine metabolism; IMP biosynthesis via de novo pathway; IMP from 5-formamido-1-(5-phospho-D-ribosyl)imidazole-4-carboxamide: step 1/1. In Cupriavidus taiwanensis (strain DSM 17343 / BCRC 17206 / CCUG 44338 / CIP 107171 / LMG 19424 / R1) (Ralstonia taiwanensis (strain LMG 19424)), this protein is Bifunctional purine biosynthesis protein PurH.